A 270-amino-acid chain; its full sequence is Nuclear receptor-interacting protein 2 (270 aa).

Basic and acidic residues predominate over residues 1-27 (MSTGQEARRDEGDSRKEQEASLRDRAH). The segment at 1–33 (MSTGQEARRDEGDSRKEQEASLRDRAHLSQQRQ) is disordered. The interval 61 to 99 (KDLQPHSVIQRRLVEGNQRRLQGESPLLQALIRGHDSSR) is interaction with NR1F2. The LXXLL motif signature appears at 192–196 (LQTLL).

As to quaternary structure, interacts with NR1F2, RARA and THRB in a ligand-dependent manner. Expression is restricted to the central nervous system (neurons in the dentate gyrus of the hippocampus, the amygdala, thalamic and hypothalamic regions).

The protein resides in the nucleus. Its function is as follows. Down-regulates transcriptional activation by nuclear receptors, such as NR1F2. This chain is Nuclear receptor-interacting protein 2 (Nrip2), found in Mus musculus (Mouse).